A 709-amino-acid chain; its full sequence is Phosphoribosylformylglycinamidine synthase subunit PurL (709 aa).

Histidine 36 is a catalytic residue. Tyrosine 39 and lysine 80 together coordinate ATP. Glutamate 82 serves as a coordination point for Mg(2+). Substrate contacts are provided by residues 83-86 and arginine 105; that span reads SHNH. The active-site Proton acceptor is the histidine 84. Residue aspartate 106 participates in Mg(2+) binding. Position 226 (glutamine 226) interacts with substrate. Aspartate 252 is a Mg(2+) binding site. 294 to 296 contributes to the substrate binding site; the sequence is ETQ. Aspartate 470 and glycine 507 together coordinate ATP. Serine 510 contacts substrate.

It belongs to the FGAMS family. As to quaternary structure, monomer. Part of the FGAM synthase complex composed of 1 PurL, 1 PurQ and 2 PurS subunits.

The protein localises to the cytoplasm. The enzyme catalyses N(2)-formyl-N(1)-(5-phospho-beta-D-ribosyl)glycinamide + L-glutamine + ATP + H2O = 2-formamido-N(1)-(5-O-phospho-beta-D-ribosyl)acetamidine + L-glutamate + ADP + phosphate + H(+). The protein operates within purine metabolism; IMP biosynthesis via de novo pathway; 5-amino-1-(5-phospho-D-ribosyl)imidazole from N(2)-formyl-N(1)-(5-phospho-D-ribosyl)glycinamide: step 1/2. Its function is as follows. Part of the phosphoribosylformylglycinamidine synthase complex involved in the purines biosynthetic pathway. Catalyzes the ATP-dependent conversion of formylglycinamide ribonucleotide (FGAR) and glutamine to yield formylglycinamidine ribonucleotide (FGAM) and glutamate. The FGAM synthase complex is composed of three subunits. PurQ produces an ammonia molecule by converting glutamine to glutamate. PurL transfers the ammonia molecule to FGAR to form FGAM in an ATP-dependent manner. PurS interacts with PurQ and PurL and is thought to assist in the transfer of the ammonia molecule from PurQ to PurL. The chain is Phosphoribosylformylglycinamidine synthase subunit PurL from Saccharolobus islandicus (strain Y.N.15.51 / Yellowstone #2) (Sulfolobus islandicus).